The primary structure comprises 340 residues: Protein-arginine kinase (340 aa).

The Phosphagen kinase C-terminal domain maps to 14–244 (IVITTRIRLA…EQIINQENLS (231 aa)). ATP-binding positions include 17–21 (TTRIR), His81, Arg115, 166–170 (RASVM), and 197–202 (RGLWGE).

Belongs to the ATP:guanido phosphotransferase family.

It carries out the reaction L-arginyl-[protein] + ATP = N(omega)-phospho-L-arginyl-[protein] + ADP + H(+). Catalyzes the specific phosphorylation of arginine residues in proteins. In Clostridium acetobutylicum (strain ATCC 824 / DSM 792 / JCM 1419 / IAM 19013 / LMG 5710 / NBRC 13948 / NRRL B-527 / VKM B-1787 / 2291 / W), this protein is Protein-arginine kinase.